We begin with the raw amino-acid sequence, 778 residues long: DNA topoisomerase 1 (778 aa).

The disordered stretch occupies residues 1 to 141 (MNSSDEEDIA…ETPEEDQGYK (141 aa)). Residues 17-26 (KSSSITSAST) are compositionally biased toward low complexity. 2 stretches are compositionally biased toward basic and acidic residues: residues 71-83 (VKTE…EPKS) and 100-121 (EKTT…ESKT). Residues 122-131 (QSDSQASVKS) show a composition bias toward polar residues. Interaction with DNA regions lie at residues 367-368 (KY), 430-435 (RAGGEK), and 522-524 (TAK). A Topo IB-type catalytic domain is found at 374-778 (NSSVKGQSDF…IESADENWRF (405 aa)). Tyr736 serves as the catalytic O-(3'-phospho-DNA)-tyrosine intermediate.

Belongs to the type IB topoisomerase family.

The enzyme catalyses ATP-independent breakage of single-stranded DNA, followed by passage and rejoining.. Releases the supercoiling and torsional tension of DNA introduced during the DNA replication and transcription by transiently cleaving and rejoining one strand of the DNA duplex. Introduces a single-strand break via transesterification at a target site in duplex DNA. The scissile phosphodiester is attacked by the catalytic tyrosine of the enzyme, resulting in the formation of a DNA-(3'-phosphotyrosyl)-enzyme intermediate and the expulsion of a 5'-OH DNA strand. The free DNA strand then rotates around the intact phosphodiester bond on the opposing strand, thus removing DNA supercoils. Finally, in the religation step, the DNA 5'-OH attacks the covalent intermediate to expel the active-site tyrosine and restore the DNA phosphodiester backbone. This chain is DNA topoisomerase 1 (TOP1), found in Candida albicans (Yeast).